We begin with the raw amino-acid sequence, 254 residues long: Countin-2 (254 aa).

The signal sequence occupies residues Met1–Ala19. One can recognise a Saposin B-type domain in the interval Gln22–Gln107. 3 disulfides stabilise this stretch: Cys26-Cys103, Cys29-Cys97, and Cys56-Cys68. 2 N-linked (GlcNAc...) asparagine glycosylation sites follow: Asn110 and Asn219. Residues Gln231 to Tyr254 are disordered. Residues Thr233 to Ser245 show a composition bias toward gly residues.

It belongs to the countin family.

Its subcellular location is the secreted. Cell-counting factor that limits the minimum size of the multicellular structure. May up-regulate the expression of both gp24 and gp80, which mediate cell adhesion. The chain is Countin-2 (ctnB) from Dictyostelium discoideum (Social amoeba).